A 206-amino-acid polypeptide reads, in one-letter code: Uridine kinase (206 aa).

11 to 18 serves as a coordination point for ATP; that stretch reads GGSASGKT.

The protein belongs to the uridine kinase family.

The protein resides in the cytoplasm. The catalysed reaction is uridine + ATP = UMP + ADP + H(+). The enzyme catalyses cytidine + ATP = CMP + ADP + H(+). It participates in pyrimidine metabolism; CTP biosynthesis via salvage pathway; CTP from cytidine: step 1/3. The protein operates within pyrimidine metabolism; UMP biosynthesis via salvage pathway; UMP from uridine: step 1/1. This Lactococcus lactis subsp. cremoris (strain MG1363) protein is Uridine kinase.